The primary structure comprises 657 residues: Glycogen debranching enzyme (657 aa).

Aspartate 336 serves as the catalytic Nucleophile. Residue glutamate 371 is the Proton donor of the active site. Residues 460 to 479 (ANGEENRDGTNNNHSFNHGI) are disordered.

This sequence belongs to the glycosyl hydrolase 13 family.

It carries out the reaction Hydrolysis of (1-&gt;6)-alpha-D-glucosidic linkages to branches with degrees of polymerization of three or four glucose residues in limit dextrin.. It participates in glycan degradation; glycogen degradation. In terms of biological role, removes maltotriose and maltotetraose chains that are attached by 1,6-alpha-linkage to the limit dextrin main chain, generating a debranched limit dextrin. The chain is Glycogen debranching enzyme from Enterobacter sp. (strain 638).